Reading from the N-terminus, the 400-residue chain is Trans-enoyl reductase ucsL (400 aa).

50–53 provides a ligand contact to NADP(+); that stretch reads TDHK. 145–152 serves as a coordination point for substrate; it reads SVHGSVAL. NADP(+)-binding positions include 204–207, 227–230, Y245, and 292–293; these read STAC, SPRN, and LE. 313–317 contributes to the substrate binding site; the sequence is GPVMF. Position 389–390 (389–390) interacts with NADP(+); sequence VS.

The protein belongs to the zinc-containing alcohol dehydrogenase family. Monomer.

The protein operates within mycotoxin biosynthesis. Its function is as follows. Trans-enoyl reductase; part of the gene cluster that mediates the biosynthesis of UCS1025A, a member of the pyrrolizidinone family that acts as a strong telomerase inhibitor and displays potent antibacterial and antitumor properties. These compounds share a hemiaminal-containing pyrrolizidinone core fused with a gamma-lactone, giving a furopyrrolizidine that is connected to a decalin fragment. The polyketide synthase module (PKS) of the PKS-NRPS ucsA is responsible for the synthesis of the polyketide backbone via the condensation of an acetyl-CoA starter unit with 6 malonyl-CoA units. The downstream nonribosomal peptide synthetase (NRPS) module then amidates the carboxyl end of the polyketide with a 2S,3S-methylproline derived from L-isoleucine by the 2-oxoglutarate-dependent dioxygenase ucsF which converts L-isoleucine to (4S,5S)-4-methylpyrroline-5-carboxylate that is further converted to 2S,3S-methylproline by the pyrroline-5-carboxylate reductase ucsG. Reductive release of the completed aminoacyl polyketide from the assembly line can form the 3-pyrrolin-2-one structure via an intramolecular Knoevenagel reaction. Because ucsA lacks a designated enoylreductase (ER) domain, the required activity is provided the enoyl reductase ucsL. This keto acyclic precursor is the substrate of the Diels-Alderase ucsH, that catalyzes the Diels-Alder cycloaddition. Oxidation of the 3S-methyl group to a carboxylate by the cytochrome P450 monooxygenase ucsK allows an oxa-Michael cyclization that might involve the reductase/dehydrogenase ucsI and which furnishes the furopyrrolizidine. The oxidase ucsJ likely plays a critical role in stereoselective reduction of the C5-C6 double bond to afford the required R-configured carboxylate group. Further enolization and oxidation at C5 by an unidentified enzyme affords the last intermediate that can undergo oxa-Michael cyclization to yield UCS1025A. This Acremonium sp protein is Trans-enoyl reductase ucsL.